The primary structure comprises 249 residues: Hydantoin racemase (249 aa).

It belongs to the HyuE racemase family. In terms of assembly, homohexamer.

The catalysed reaction is a D-5-monosubstituted hydantoin = a L-5-monosubstituted hydantoin. It catalyses the reaction D-5-[2-(methylsulfanyl)ethyl]hydantoin = L-5-[2-(methysulfanyl)ethyl]hydantoin. It carries out the reaction D-5-benzylhydantoin = L-5-benzylhydantoin. The enzyme catalyses D-5-isopropylhydantoin = L-5-isopropylhydantoin. The catalysed reaction is D-5-isobutylhydantoin = L-5-isobutylhydantoin. With respect to regulation, strongly inhibited by Cu(2+) and Zn(2+). Slightly stimulated by the addition of Mn(2+) or Co(2+), but also by metal-chelating agents such as EDTA or EGTA, indicating that the enzyme is not a metalloenzyme. In terms of biological role, involved in the asymmetric conversion of racemic 5-substituted hydantoins to the corresponding L-amino acids. Catalyzes the racemization via enolization of D- and L-5-monosubstituted hydantoins. Is able to racemize 5-substituted hydantoins having aromatic or aliphatic substituents such as 5-(2-methylthioethyl)hydantoin, 5-isopropylhydantoin, 5-isobutylhydantoin and 5-benzylhydantoin. This is Hydantoin racemase from Pseudomonas sp. (strain NS671).